The following is a 176-amino-acid chain: Protein FimF (176 aa).

Positions 1–20 (MRNKPFYLLCAFLWLAVSHA) are cleaved as a signal peptide. Cysteine 38 and cysteine 78 are disulfide-bonded.

It belongs to the fimbrial protein family.

Its subcellular location is the fimbrium. Involved in regulation of length and mediation of adhesion of type 1 fimbriae (but not necessary for the production of fimbriae). Involved in the integration of FimH in the fimbriae. The chain is Protein FimF (fimF) from Escherichia coli (strain K12).